Reading from the N-terminus, the 229-residue chain is MDNKGWSLKGSLLPLLLLVSDLLLCQGVTSLPICPTGAVNCQVSLRDLFDRAVILSHYIHNLSSEMFNEFDKRYAQGRGFITKAINSCHTSSLSTPEDKEQAQQIHHEDLLNLILRVLRSWNDPLYHLVSEVRGMQEAPDSILSRAIEIEEQNRRLLEGMEKIVGQVHPGVRENEVYSVWSGLPSLQMADEDSRLFAFYNLLHCLRRDSHKIDNYLKLLKCRIVYDSNC.

The N-terminal stretch at 1-30 is a signal peptide; that stretch reads MDNKGWSLKGSLLPLLLLVSDLLLCQGVTS. A disulfide bridge connects residues Cys34 and Cys41. Ser56, Ser64, and Ser120 each carry phosphoserine. 2 disulfide bridges follow: Cys88/Cys204 and Cys221/Cys229.

It belongs to the somatotropin/prolactin family. In terms of assembly, interacts with PRLR.

The protein localises to the secreted. In terms of biological role, prolactin acts primarily on the mammary gland by promoting lactation. The polypeptide is Prolactin (PRL) (Neovison vison (American mink)).